Here is a 101-residue protein sequence, read N- to C-terminus: Phosphoribosyl-AMP cyclohydrolase (101 aa).

Position 71 (Asp71) interacts with Mg(2+). Cys72 is a binding site for Zn(2+). Mg(2+)-binding residues include Asp73 and Asp75. Cys88 and Cys95 together coordinate Zn(2+).

It belongs to the PRA-CH family. Homodimer. Mg(2+) serves as cofactor. Requires Zn(2+) as cofactor.

The protein resides in the cytoplasm. It catalyses the reaction 1-(5-phospho-beta-D-ribosyl)-5'-AMP + H2O = 1-(5-phospho-beta-D-ribosyl)-5-[(5-phospho-beta-D-ribosylamino)methylideneamino]imidazole-4-carboxamide. The protein operates within amino-acid biosynthesis; L-histidine biosynthesis; L-histidine from 5-phospho-alpha-D-ribose 1-diphosphate: step 3/9. Its function is as follows. Catalyzes the hydrolysis of the adenine ring of phosphoribosyl-AMP. The protein is Phosphoribosyl-AMP cyclohydrolase of Bacillus cereus (strain AH187).